Here is a 591-residue protein sequence, read N- to C-terminus: Aspartate--tRNA(Asp/Asn) ligase (591 aa).

Residue Glu-176 participates in L-aspartate binding. The segment at 200-203 (QLFK) is aspartate. An L-aspartate-binding site is contributed by Arg-222. Residues 222-224 (RDE) and Gln-231 each bind ATP. An L-aspartate-binding site is contributed by His-450. Glu-484 is an ATP binding site. Arg-491 is an L-aspartate binding site. 536 to 539 (GLDR) provides a ligand contact to ATP.

This sequence belongs to the class-II aminoacyl-tRNA synthetase family. Type 1 subfamily. In terms of assembly, homodimer.

Its subcellular location is the cytoplasm. It carries out the reaction tRNA(Asx) + L-aspartate + ATP = L-aspartyl-tRNA(Asx) + AMP + diphosphate. In terms of biological role, aspartyl-tRNA synthetase with relaxed tRNA specificity since it is able to aspartylate not only its cognate tRNA(Asp) but also tRNA(Asn). Reaction proceeds in two steps: L-aspartate is first activated by ATP to form Asp-AMP and then transferred to the acceptor end of tRNA(Asp/Asn). The polypeptide is Aspartate--tRNA(Asp/Asn) ligase (Bacillus mycoides (strain KBAB4) (Bacillus weihenstephanensis)).